Here is a 444-residue protein sequence, read N- to C-terminus: Phosphoglucosamine mutase (444 aa).

Residue Ser102 is the Phosphoserine intermediate of the active site. 4 residues coordinate Mg(2+): Ser102, Asp241, Asp243, and Asp245. Ser102 bears the Phosphoserine mark.

The protein belongs to the phosphohexose mutase family. Requires Mg(2+) as cofactor. In terms of processing, activated by phosphorylation.

The enzyme catalyses alpha-D-glucosamine 1-phosphate = D-glucosamine 6-phosphate. Its function is as follows. Catalyzes the conversion of glucosamine-6-phosphate to glucosamine-1-phosphate. The polypeptide is Phosphoglucosamine mutase (Pasteurella multocida (strain Pm70)).